The primary structure comprises 2090 residues: Host cell factor 1 (2090 aa).

A2 bears the N-acetylalanine mark. S6 is subject to Phosphoserine. Kelch repeat units lie at residues 44-89 (LIVV…GFVC), 93-140 (RLLV…RLGH), 148-194 (KCYL…ITYG), 217-265 (KLVI…TIGN), and 266-313 (KMYV…LMDT). Glycyl lysine isopeptide (Lys-Gly) (interchain with G-Cter in ubiquitin) cross-links involve residues K105, K163, and K244. K282 is covalently cross-linked (Glycyl lysine isopeptide (Lys-Gly) (interchain with G-Cter in SUMO2)). The residue at position 288 (K288) is an N6-acetyllysine. Residue K363 forms a Glycyl lysine isopeptide (Lys-Gly) (interchain with G-Cter in ubiquitin) linkage. A Fibronectin type-III 1 domain is found at 366–469 (PPARVQLVRA…TIQVLPTVPG (104 aa)). The disordered stretch occupies residues 407 to 434 (ATATSPTPNPVPSVPANPPKSPAPAAAA). S411 bears the Phosphoserine mark. The segment covering 413–428 (TPNPVPSVPANPPKSP) has biased composition (pro residues). The interval 500-550 (LVTMRPAGQAGKAPVTVTSLPASVRMVVPTQSAQGTVIGSNPQMSGMAALA) is required for interaction with OGT. 2 positions are modified to omega-N-methylarginine: R504 and R524. Phosphoserine occurs at positions 598, 666, and 669. The interval 610–722 (LKTAAAQVGT…KGPLPAGTIL (113 aa)) is interaction with SIN3A. The interaction with ZBTB17 stretch occupies residues 750–902 (ILGISSVSPS…SLAGAGAHST (153 aa)). K813 is modified (N6-acetyllysine). Residues 813 to 912 (KIITAVPKIA…SASLATPITT (100 aa)) form an interaction with GABP2 region. HCF repeat repeat units follow at residues 1010-1035 (TLVCSNPPCETHETGTTNTATTTVVA), 1072-1097 (VRVCSNPPCETHETGTTNTATTATSN), and 1101-1126 (QHGCSNPPCETHETGTTSTATTAMSS). Positions 1098–1140 (MAGQHGCSNPPCETHETGTTSTATTAMSSMGTGQQRDTRHTSS) are disordered. Residues 1114-1130 (TGTTSTATTAMSSMGTG) show a composition bias toward low complexity. The stretch at 1157–1182 (TQGTVKPQCQTQQANMTNTTMTVQAT) is one HCF repeat 4; degenerate repeat. S1204 carries the phosphoserine modification. The residue at position 1216 (R1216) is an Asymmetric dimethylarginine. S1223 is subject to Phosphoserine. HCF repeat repeat units follow at residues 1295-1320 (TQVCSNPPCETHETGTTNTATTSNAG) and 1323-1348 (QRVCSNPPCETHETGTTHTATTATSN). 2 disordered regions span residues 1302–1374 (PCET…TTST) and 1444–1486 (TVTS…TTVS). Positions 1308 to 1321 (TGTTNTATTSNAGS) are enriched in low complexity. Residues 1358-1383 (QQPAGGRPCETHQTTSTGTTMSVSVG) form an HCF repeat 7; degenerate repeat. The stretch at 1423-1448 (QRVCSNPPCETHETGTTHTATTVTSN) is one HCF repeat 8 repeat. The segment covering 1465–1475 (VVSTQGDSANI) has biased composition (polar residues). Positions 1476-1486 (TSSSGITTTVS) are enriched in low complexity. T1500 carries the phosphothreonine modification. A phosphoserine mark is found at S1506, S1559, and S1826. 2 Fibronectin type-III domains span residues 1853-1943 (PPPP…TCLP) and 1945-2061 (FPGA…TSKD). Glycyl lysine isopeptide (Lys-Gly) (interchain with G-Cter in ubiquitin) cross-links involve residues K1862 and K1863. Residue S1893 is modified to Phosphoserine. The disordered stretch occupies residues 2049 to 2090 (ATQVRWLQETSKDSSGTKPASKRPMSSPEMKSAPKKSKADGQ). An N6-acetyllysine modification is found at K2060. A Glycyl lysine isopeptide (Lys-Gly) (interchain with G-Cter in SUMO2) cross-link involves residue K2079.

Composed predominantly of six polypeptides ranging from 110 to 150 kDa and a minor 300 kDa polypeptide. The majority of N- and C-terminal cleavage products remain tightly, albeit non-covalently, associated. Interacts with POU2F1, CREB3, ZBTB17, EGR2, E2F4, CREBZF, SP1, GABP2, Sin3 HDAC complex (SIN3A, HDAC1, HDAC2, SUDS3), SAP30, SIN3B and FHL2. Component of a MLL1 complex, composed of at least the core components KMT2A/MLL1, ASH2L, HCFC1, WDR5 and RBBP5, as well as the facultative components BACC1, CHD8, DPY30, E2F6, HCFC2, HSP70, INO80C, KANSL1, LAS1L, MAX, MCRS1, MEN1, MGA, KAT8, PELP1, PHF20, PRP31, RING2, RUVBL1, RUVBL2, SENP3, TAF1, TAF4, TAF6, TAF7, TAF9 and TEX10. Component of a THAP1/THAP3-HCFC1-OGT complex that is required for the regulation of the transcriptional activity of RRM1. Interacts directly with THAP3 (via its HBM). Interacts (via the Kelch-repeat domain) with THAP1 (via the HBM); the interaction recruits HCHC1 to the RRM1. Interacts directly with OGT; the interaction, which requires the HCFC1 cleavage site domain, glycosylates and promotes the proteolytic processing of HCFC1 and retains OGT in the nucleus. Component of the SET1 complex, at least composed of the catalytic subunit (SETD1A or SETD1B), WDR5, WDR82, RBBP5, ASH2L, CXXC1, HCFC1 and DPY30. Component of the NSL complex at least composed of MOF/KAT8, KANSL1, KANSL2, KANSL3, MCRS1, PHF20, OGT1/OGT, WDR5 and HCFC1. Component of a complex at least composed of ZNF335, HCFC1, CCAR2, EMSY, MKI67, RBBP5, ASH2L and WDR5; the complex is formed as a result of interactions between components of a nuclear receptor-mediated transcription complex and a histone methylation complex. Within the complex interacts with ZNF335. Interacts with TET2 and TET3. Interacts with HCFC1R1. Interacts with THAP11. Interacts (via Kelch domain) with KMT2E (via HBM motif). Interacts with E2F1. Accessory scaffold component of the polycomb repressive deubiquitinase (PR-DUB) complex, at least composed of BAP1, one of ASXL1, ASXL2 or (probably) ASXL3 and one of MBD5 or MBD6; the PR-DUB core associates with a number of accessory proteins, including FOXK1, FOXK2, KDM1B, HCFC1, YY1 and OGT. Interacts with YY1 (via Gly-rich region); the interaction is direct. Interacts with BAP1 (via HBM-like motif). In terms of processing, proteolytically cleaved at one or several PPCE--THET sites within the HCF repeats. Cleavage is promoted by O-glycosylation. Further cleavage of the primary N- and C-terminal chains results in a 'trimming' and accumulation of the smaller chains. Cleavage is promoted by O-glycosylation. Post-translationally, O-glycosylated. GlcNAcylation by OGT promotes proteolytic processing. Ubiquitinated. Lys-1862 and Lys-1863 are ubiquitinated both via 'Lys-48'- and 'Lys-63'-linked polyubiquitin chains. BAP1 mediated deubiquitination of 'Lys-48'-linked polyubiquitin chains; deubiquitination by BAP1 does not seem to stabilize the protein.

The protein resides in the cytoplasm. The protein localises to the nucleus. Functionally, transcriptional coregulator. Serves as a scaffold protein, bridging interactions between transcription factors, including THAP11 and ZNF143, and transcriptional coregulators. Involved in control of the cell cycle. Also antagonizes transactivation by ZBTB17 and GABP2; represses ZBTB17 activation of the p15(INK4b) promoter and inhibits its ability to recruit p300. Coactivator for EGR2 and GABP2. Tethers the chromatin modifying Set1/Ash2 histone H3 'Lys-4' methyltransferase (H3K4me) and Sin3 histone deacetylase (HDAC) complexes (involved in the activation and repression of transcription respectively) together. As part of the NSL complex it may be involved in acetylation of nucleosomal histone H4 on several lysine residues. Recruits KMT2E to E2F1 responsive promoters promoting transcriptional activation and thereby facilitates G1 to S phase transition. Modulates expression of homeobox protein PDX1, perhaps acting in concert with transcription factor E2F1, thereby regulating pancreatic beta-cell growth and glucose-stimulated insulin secretion. May negatively modulate transcriptional activity of FOXO3. The sequence is that of Host cell factor 1 from Mesocricetus auratus (Golden hamster).